Reading from the N-terminus, the 148-residue chain is ATP synthase epsilon chain (148 aa).

This sequence belongs to the ATPase epsilon chain family. F-type ATPases have 2 components, CF(1) - the catalytic core - and CF(0) - the membrane proton channel. CF(1) has five subunits: alpha(3), beta(3), gamma(1), delta(1), epsilon(1). CF(0) has three main subunits: a, b and c.

Its subcellular location is the cell membrane. Functionally, produces ATP from ADP in the presence of a proton gradient across the membrane. This is ATP synthase epsilon chain from Streptococcus thermophilus (strain ATCC BAA-491 / LMD-9).